The sequence spans 479 residues: Dynein regulatory complex subunit 4 (479 aa).

Coiled-coil stretches lie at residues 28-93 (RDQL…LADI), 117-170 (RAEA…FNEK), and 210-347 (EVEE…GLKE).

Belongs to the DRC4 family.

It localises to the cytoplasm. The protein localises to the cytoskeleton. It is found in the flagellum basal body. Functionally, cytoskeletal linker which probably functions in axonemal and non-axonemal dynein regulation. May play a role in the spermatozoa motility. This chain is Dynein regulatory complex subunit 4, found in Drosophila melanogaster (Fruit fly).